A 381-amino-acid polypeptide reads, in one-letter code: Queuine tRNA-ribosyltransferase (381 aa).

The Proton acceptor role is filled by D89. Substrate contacts are provided by residues 89–93 (DSGGF), D143, Q187, and G214. Residues 245–251 (GVGKPED) form an RNA binding region. The active-site Nucleophile is D264. An RNA binding; important for wobble base 34 recognition region spans residues 269–273 (TRNAR). C302, C304, C307, and H333 together coordinate Zn(2+).

Belongs to the queuine tRNA-ribosyltransferase family. As to quaternary structure, homodimer. Within each dimer, one monomer is responsible for RNA recognition and catalysis, while the other monomer binds to the replacement base PreQ1. Zn(2+) serves as cofactor.

The catalysed reaction is 7-aminomethyl-7-carbaguanine + guanosine(34) in tRNA = 7-aminomethyl-7-carbaguanosine(34) in tRNA + guanine. The protein operates within tRNA modification; tRNA-queuosine biosynthesis. Functionally, catalyzes the base-exchange of a guanine (G) residue with the queuine precursor 7-aminomethyl-7-deazaguanine (PreQ1) at position 34 (anticodon wobble position) in tRNAs with GU(N) anticodons (tRNA-Asp, -Asn, -His and -Tyr). Catalysis occurs through a double-displacement mechanism. The nucleophile active site attacks the C1' of nucleotide 34 to detach the guanine base from the RNA, forming a covalent enzyme-RNA intermediate. The proton acceptor active site deprotonates the incoming PreQ1, allowing a nucleophilic attack on the C1' of the ribose to form the product. After dissociation, two additional enzymatic reactions on the tRNA convert PreQ1 to queuine (Q), resulting in the hypermodified nucleoside queuosine (7-(((4,5-cis-dihydroxy-2-cyclopenten-1-yl)amino)methyl)-7-deazaguanosine). This is Queuine tRNA-ribosyltransferase from Pectobacterium carotovorum subsp. carotovorum (strain PC1).